The following is a 188-amino-acid chain: Threonylcarbamoyl-AMP synthase (188 aa).

Positions 3–188 (QLHPSDIKDI…RSGKILRNGQ (186 aa)) constitute a YrdC-like domain.

Belongs to the SUA5 family. TsaC subfamily.

It localises to the cytoplasm. The enzyme catalyses L-threonine + hydrogencarbonate + ATP = L-threonylcarbamoyladenylate + diphosphate + H2O. Required for the formation of a threonylcarbamoyl group on adenosine at position 37 (t(6)A37) in tRNAs that read codons beginning with adenine. Catalyzes the conversion of L-threonine, HCO(3)(-)/CO(2) and ATP to give threonylcarbamoyl-AMP (TC-AMP) as the acyladenylate intermediate, with the release of diphosphate. The chain is Threonylcarbamoyl-AMP synthase from Shewanella putrefaciens (strain CN-32 / ATCC BAA-453).